A 404-amino-acid chain; its full sequence is S-adenosylmethionine synthase (404 aa).

139–144 (GKGSTD) lines the ATP pocket.

This sequence belongs to the AdoMet synthase 2 family. The cofactor is Mg(2+).

The enzyme catalyses L-methionine + ATP + H2O = S-adenosyl-L-methionine + phosphate + diphosphate. Its pathway is amino-acid biosynthesis; S-adenosyl-L-methionine biosynthesis; S-adenosyl-L-methionine from L-methionine: step 1/1. Its function is as follows. Catalyzes the formation of S-adenosylmethionine from methionine and ATP. This chain is S-adenosylmethionine synthase, found in Saccharolobus islandicus (strain Y.N.15.51 / Yellowstone #2) (Sulfolobus islandicus).